The chain runs to 455 residues: tRNA modification GTPase MnmE (455 aa).

Residues arginine 24, glutamate 81, and lysine 121 each coordinate (6S)-5-formyl-5,6,7,8-tetrahydrofolate. A TrmE-type G domain is found at 217-378; it reads GMKVVIAGRP…LREHLKDCMG (162 aa). Asparagine 227 provides a ligand contact to K(+). Residues 227–232, 246–252, 271–274, and 359–361 contribute to the GTP site; these read NAGKSS, TDIAGTT, DTAG, and SAR. Position 231 (serine 231) interacts with Mg(2+). K(+) contacts are provided by threonine 246, isoleucine 248, and threonine 251. Threonine 252 serves as a coordination point for Mg(2+). Lysine 455 is a binding site for (6S)-5-formyl-5,6,7,8-tetrahydrofolate.

This sequence belongs to the TRAFAC class TrmE-Era-EngA-EngB-Septin-like GTPase superfamily. TrmE GTPase family. Homodimer. Heterotetramer of two MnmE and two MnmG subunits. K(+) serves as cofactor.

The protein localises to the cytoplasm. In terms of biological role, exhibits a very high intrinsic GTPase hydrolysis rate. Involved in the addition of a carboxymethylaminomethyl (cmnm) group at the wobble position (U34) of certain tRNAs, forming tRNA-cmnm(5)s(2)U34. The chain is tRNA modification GTPase MnmE from Photobacterium profundum (strain SS9).